A 231-amino-acid chain; its full sequence is Septum site-determining protein MinC (231 aa).

This sequence belongs to the MinC family. Interacts with MinD and FtsZ.

Its function is as follows. Cell division inhibitor that blocks the formation of polar Z ring septums. Rapidly oscillates between the poles of the cell to destabilize FtsZ filaments that have formed before they mature into polar Z rings. Prevents FtsZ polymerization. The polypeptide is Septum site-determining protein MinC (Shigella flexneri).